Here is an 80-residue protein sequence, read N- to C-terminus: Penaeidin-3 (80 aa).

An N-terminal signal peptide occupies residues 1–19 (MRLVVCLVYLVSFALVCQG). Gln-20 carries the post-translational modification Pyrrolidone carboxylic acid. Cystine bridges form between Cys-54-Cys-67, Cys-57-Cys-74, and Cys-68-Cys-75.

Belongs to the penaeidin family. The N-terminus forms pyrrolidone carboxylic acid. Strongly expressed in hemocytes, and to a lesser extent in heart, muscle, gills, intestine and eyestalk. Lowest expression in hepatopancreas.

The protein localises to the cytoplasmic granule. Functionally, antibacterial and antifungal activity. Presents chitin-binding activity. This is Penaeidin-3 from Penaeus indicus (Indian white prawn).